The primary structure comprises 207 residues: Alpha-1-acid glycoprotein 1 (207 aa).

The first 18 residues, 1–18, serve as a signal peptide directing secretion; it reads MALHMILVMLSLLPLLEA. Gln19 carries the post-translational modification Pyrrolidone carboxylic acid. Residues Asn25, Asn34, Asn76, Asn94, and Asn104 are each glycosylated (N-linked (GlcNAc...) asparagine). Cys91 and Cys184 are joined by a disulfide.

Belongs to the calycin superfamily. Lipocalin family. As to expression, expressed by the liver and secreted in plasma.

It localises to the secreted. In terms of biological role, functions as a transport protein in the blood stream. Binds various ligands in the interior of its beta-barrel domain. Appears to function in modulating the activity of the immune system during the acute-phase reaction. This Mus caroli (Ryukyu mouse) protein is Alpha-1-acid glycoprotein 1 (Orm1).